Consider the following 416-residue polypeptide: Gamma-glutamyl phosphate reductase (416 aa).

This sequence belongs to the gamma-glutamyl phosphate reductase family.

Its subcellular location is the cytoplasm. The enzyme catalyses L-glutamate 5-semialdehyde + phosphate + NADP(+) = L-glutamyl 5-phosphate + NADPH + H(+). The protein operates within amino-acid biosynthesis; L-proline biosynthesis; L-glutamate 5-semialdehyde from L-glutamate: step 2/2. Its function is as follows. Catalyzes the NADPH-dependent reduction of L-glutamate 5-phosphate into L-glutamate 5-semialdehyde and phosphate. The product spontaneously undergoes cyclization to form 1-pyrroline-5-carboxylate. In Streptococcus equi subsp. zooepidemicus (strain MGCS10565), this protein is Gamma-glutamyl phosphate reductase.